The primary structure comprises 160 residues: MSDPGFLAAPVLLLLLVSLASASLEQAASRDDDSAERPLSKRHSEGTFTSDYSKYLENKQAKDFVRWLMNAKRGGSELQRRHADGTFTNDMTSYLDAKAARDFVSWLARSDKSRRDGGDHLAENSEDKRHAEDVNALLDRTMAKTFIEWLEKQNSNDQTD.

Residues 1–22 (MSDPGFLAAPVLLLLLVSLASA) form the signal peptide. Propeptides lie at residues 23–40 (SLEQ…RPLS), 74–79 (GGSELQ), and 116–127 (DGGDHLAENSED). Residues 112–132 (KSRRDGGDHLAENSEDKRHAE) are disordered.

Belongs to the glucagon family.

It localises to the secreted. Promotes hydrolysis of glycogen and lipids, and raises the blood sugar level. The polypeptide is Glucagon-1 (gcg1) (Petromyzon marinus (Sea lamprey)).